The sequence spans 257 residues: Probable ABC transporter arginine-binding protein ArtJ (257 aa).

A signal peptide spans 1–23; sequence MCIKRKKTWIAFLAVVCSFCLTG. Residues asparagine 41, glutamate 48, glycine 100, serine 102, arginine 107, and tyrosine 151 each contribute to the L-arginine site.

This sequence belongs to the bacterial solute-binding protein 3 family.

It is found in the secreted. Its subcellular location is the cell surface. Probably part of an ABC transporter complex involved in arginine transport. Binds arginine. Interacts with host epithelial cells, suggesting a role in host-cell adhesion during infection. This chain is Probable ABC transporter arginine-binding protein ArtJ, found in Chlamydia trachomatis serovar D (strain ATCC VR-885 / DSM 19411 / UW-3/Cx).